The primary structure comprises 138 residues: Small ribosomal subunit protein uS11c (138 aa).

It belongs to the universal ribosomal protein uS11 family. In terms of assembly, part of the 30S ribosomal subunit.

The protein localises to the plastid. The protein resides in the chloroplast. The polypeptide is Small ribosomal subunit protein uS11c (Nandina domestica (Heavenly bamboo)).